The chain runs to 347 residues: UDP-3-O-acylglucosamine N-acyltransferase 1 (347 aa).

Residue histidine 246 is the Proton acceptor of the active site.

The protein belongs to the transferase hexapeptide repeat family. LpxD subfamily. In terms of assembly, homotrimer.

It catalyses the reaction a UDP-3-O-[(3R)-3-hydroxyacyl]-alpha-D-glucosamine + a (3R)-hydroxyacyl-[ACP] = a UDP-2-N,3-O-bis[(3R)-3-hydroxyacyl]-alpha-D-glucosamine + holo-[ACP] + H(+). It participates in bacterial outer membrane biogenesis; LPS lipid A biosynthesis. Its function is as follows. Catalyzes the N-acylation of UDP-3-O-acylglucosamine using 3-hydroxyacyl-ACP as the acyl donor. Is involved in the biosynthesis of lipid A, a phosphorylated glycolipid that anchors the lipopolysaccharide to the outer membrane of the cell. The protein is UDP-3-O-acylglucosamine N-acyltransferase 1 of Francisella tularensis subsp. holarctica (strain LVS).